Here is a 313-residue protein sequence, read N- to C-terminus: tRNA dimethylallyltransferase (313 aa).

11–18 (GPTACGKT) provides a ligand contact to ATP. 13–18 (TACGKT) is a substrate binding site. Interaction with substrate tRNA regions lie at residues 36–39 (DSAL), 160–164 (QRIGR), and 243–248 (RCVGYR).

It belongs to the IPP transferase family. As to quaternary structure, monomer. It depends on Mg(2+) as a cofactor.

The enzyme catalyses adenosine(37) in tRNA + dimethylallyl diphosphate = N(6)-dimethylallyladenosine(37) in tRNA + diphosphate. Its function is as follows. Catalyzes the transfer of a dimethylallyl group onto the adenine at position 37 in tRNAs that read codons beginning with uridine, leading to the formation of N6-(dimethylallyl)adenosine (i(6)A). This Neisseria gonorrhoeae (strain ATCC 700825 / FA 1090) protein is tRNA dimethylallyltransferase.